A 142-amino-acid polypeptide reads, in one-letter code: Deoxyuridine 5'-triphosphate nucleotidohydrolase (142 aa).

The protein belongs to the dUTPase family. Mg(2+) serves as cofactor.

The catalysed reaction is dUTP + H2O = dUMP + diphosphate + H(+). Functionally, this enzyme is involved in nucleotide metabolism: it produces dUMP, the immediate precursor of thymidine nucleotides and it decreases the intracellular concentration of dUTP so that uracil cannot be incorporated into DNA. The protein is Deoxyuridine 5'-triphosphate nucleotidohydrolase (DUT) of Swinepox virus (strain Kasza) (SWPV).